The chain runs to 289 residues: E3 ubiquitin-protein ligase MARCHF5 (289 aa).

Residues 4-73 (VDEPPEKHCW…PQCGTEYRIV (70 aa)) form an RING-CH-type zinc finger. Positions 12, 15, 31, 33, 41, 44, 63, and 66 each coordinate Zn(2+). The next 4 membrane-spanning stretches (helical) occupy residues 97–117 (FAAAGVVVGTVYWSAVTYGAV), 137–157 (PLFLLMGLPTIPVMLVLGKMI), 202–222 (LSVSRTLCGALIFPSIANLVG), and 236–256 (TILGGIAFVVMKGVLKVYFKQ).

It is found in the mitochondrion outer membrane. Its subcellular location is the endoplasmic reticulum membrane. It carries out the reaction S-ubiquitinyl-[E2 ubiquitin-conjugating enzyme]-L-cysteine + [acceptor protein]-L-lysine = [E2 ubiquitin-conjugating enzyme]-L-cysteine + N(6)-ubiquitinyl-[acceptor protein]-L-lysine.. It participates in protein modification; protein ubiquitination. Its function is as follows. Mitochondrial E3 ubiquitin-protein ligase that plays a crucial role in the control of mitochondrial morphology by acting as a positive regulator of mitochondrial fission. May play a role in the prevention of cell senescence acting as a regulator of mitochondrial quality control. The protein is E3 ubiquitin-protein ligase MARCHF5 (marchf5) of Danio rerio (Zebrafish).